A 441-amino-acid polypeptide reads, in one-letter code: tRNA modification GTPase MnmE (441 aa).

Arginine 24, glutamate 81, and lysine 121 together coordinate (6S)-5-formyl-5,6,7,8-tetrahydrofolate. The region spanning 218-366 (GMVVAIAGPP…LLRELTRFAA (149 aa)) is the TrmE-type G domain. GTP is bound by residues 228–233 (NVGKST), 247–253 (SPHAGTT), and 272–275 (DTAG). Mg(2+)-binding residues include serine 232 and threonine 253. Lysine 441 lines the (6S)-5-formyl-5,6,7,8-tetrahydrofolate pocket.

The protein belongs to the TRAFAC class TrmE-Era-EngA-EngB-Septin-like GTPase superfamily. TrmE GTPase family. In terms of assembly, homodimer. Heterotetramer of two MnmE and two MnmG subunits. K(+) is required as a cofactor.

Its subcellular location is the cytoplasm. Functionally, exhibits a very high intrinsic GTPase hydrolysis rate. Involved in the addition of a carboxymethylaminomethyl (cmnm) group at the wobble position (U34) of certain tRNAs, forming tRNA-cmnm(5)s(2)U34. In Rhodopseudomonas palustris (strain ATCC BAA-98 / CGA009), this protein is tRNA modification GTPase MnmE.